Consider the following 337-residue polypeptide: Calcium-binding protein 39-like (337 aa).

It belongs to the Mo25 family. In terms of assembly, component of a trimeric complex composed of STK11/LKB1, STRAD (STRADA or STRADB) and CAB39/MO25 (CAB39/MO25alpha or CAB39L/MO25beta): the complex tethers STK11/LKB1 in the cytoplasm and stimulates its catalytic activity.

Its function is as follows. Component of a complex that binds and activates STK11/LKB1. In the complex, required to stabilize the interaction between CAB39/MO25 (CAB39/MO25alpha or CAB39L/MO25beta) and STK11/LKB1. The polypeptide is Calcium-binding protein 39-like (CAB39L) (Homo sapiens (Human)).